The primary structure comprises 268 residues: Putative hydro-lyase A1S_1268 (268 aa).

The protein belongs to the D-glutamate cyclase family.

This chain is Putative hydro-lyase A1S_1268, found in Acinetobacter baumannii (strain ATCC 17978 / DSM 105126 / CIP 53.77 / LMG 1025 / NCDC KC755 / 5377).